The following is a 136-amino-acid chain: Protein NrdI (136 aa).

It belongs to the NrdI family.

Functionally, probably involved in ribonucleotide reductase function. The sequence is that of Protein NrdI from Escherichia coli O127:H6 (strain E2348/69 / EPEC).